We begin with the raw amino-acid sequence, 496 residues long: MDDKQHTSSSDDERAEIATSNQDQETNSSKRVHLKRWQFISILIGTTLITAVITVVAYIFINQKISGLNKTDQANLNKIENVYKILNSDYYKKQDSDKLSKAAIDGMVKELKDPYSEYLTKEQTKSFNEGVSGDFVGIGAEMQKKNDQIMVTSPMKGSPAERAGIRPKDVITKVNGKSIKGKALDEVVKDVRGKENTEVTLTVQRGSEEKDVKIKREKIHVKSVDYKKKGKVGVITINKFQNDTSGELKDAVLKAHKDGLKKIVLDLRNNPGGLLDEAVKMANIFIDKGKTVVKLEKGKDTEAIQTSNDSLKEAKDMDISILVNEGSASASEVFTGALKDYNKAKVYGSKTFGKGVVQTTREFKDGSLLKYTEMKWLTPDGHYIHGKGIKPDVTIDTPKYQSLNVIPNTKTFKVGDDDKNIKTIKIGLSALGYKVDNESTQFDQALENQVKAFQQANKLEVTGEFNKETNNKFTELLVEKANKHDDVLDKLINILK.

Residues 1–16 (MDDKQHTSSSDDERAE) are compositionally biased toward basic and acidic residues. The tract at residues 1 to 27 (MDDKQHTSSSDDERAEIATSNQDQETN) is disordered. Polar residues predominate over residues 18–27 (ATSNQDQETN). A helical transmembrane segment spans residues 39-59 (FISILIGTTLITAVITVVAYI). The PDZ domain maps to 124-206 (TKSFNEGVSG…TEVTLTVQRG (83 aa)). Catalysis depends on charge relay system residues Ser329, Asp340, and Lys354.

The protein belongs to the peptidase S41A family.

The protein resides in the cell membrane. This Staphylococcus aureus (strain Mu50 / ATCC 700699) protein is Probable CtpA-like serine protease.